We begin with the raw amino-acid sequence, 331 residues long: Glyceraldehyde-3-phosphate dehydrogenase (331 aa).

Residues 12–13 (RI), aspartate 34, arginine 78, and threonine 120 contribute to the NAD(+) site. An N6-acetyllysine mark is found at lysine 132 and lysine 138. Residues 149–151 (SCT) and threonine 180 contribute to the D-glyceraldehyde 3-phosphate site. Cysteine 150 serves as the catalytic Nucleophile. Lysine 192 is subject to N6-acetyllysine. D-glyceraldehyde 3-phosphate is bound by residues 209-210 (TG) and arginine 232. The residue at position 249 (lysine 249) is an N6-acetyllysine. Residue asparagine 314 participates in NAD(+) binding.

It belongs to the glyceraldehyde-3-phosphate dehydrogenase family. Homotetramer.

It is found in the cytoplasm. The enzyme catalyses D-glyceraldehyde 3-phosphate + phosphate + NAD(+) = (2R)-3-phospho-glyceroyl phosphate + NADH + H(+). It participates in carbohydrate degradation; glycolysis; pyruvate from D-glyceraldehyde 3-phosphate: step 1/5. Catalyzes the oxidative phosphorylation of glyceraldehyde 3-phosphate (G3P) to 1,3-bisphosphoglycerate (BPG) using the cofactor NAD. The first reaction step involves the formation of a hemiacetal intermediate between G3P and a cysteine residue, and this hemiacetal intermediate is then oxidized to a thioester, with concomitant reduction of NAD to NADH. The reduced NADH is then exchanged with the second NAD, and the thioester is attacked by a nucleophilic inorganic phosphate to produce BPG. This is Glyceraldehyde-3-phosphate dehydrogenase (gapA) from Escherichia coli O6:H1 (strain CFT073 / ATCC 700928 / UPEC).